The sequence spans 472 residues: F-box protein At3g03040 (472 aa).

One can recognise an F-box domain in the interval Met1–Ser49.

The chain is F-box protein At3g03040 from Arabidopsis thaliana (Mouse-ear cress).